A 229-amino-acid polypeptide reads, in one-letter code: MYYEVVIPAAGQGKRMKAGRNKLFIELKRMPVIIHTLKVFDAHAQCKRMILAINEEERQDFERLLKVHAFQTPVSLVNGGEERQQSVYEGLKAVKDADIVLVHDGARPFIKHTQIDLLVKAAIEKGSAVVAVPVKDTIKRVQEGKVEQTIERQSLWAVQTPQAFRHSILKEAHEYAERTGFLGTDDASLVEQLHGENVYIVQGDYTNIKLTTPDDLLVAKAIMDAERGY.

It belongs to the IspD/TarI cytidylyltransferase family. IspD subfamily.

It catalyses the reaction 2-C-methyl-D-erythritol 4-phosphate + CTP + H(+) = 4-CDP-2-C-methyl-D-erythritol + diphosphate. It functions in the pathway isoprenoid biosynthesis; isopentenyl diphosphate biosynthesis via DXP pathway; isopentenyl diphosphate from 1-deoxy-D-xylulose 5-phosphate: step 2/6. Its function is as follows. Catalyzes the formation of 4-diphosphocytidyl-2-C-methyl-D-erythritol from CTP and 2-C-methyl-D-erythritol 4-phosphate (MEP). The chain is 2-C-methyl-D-erythritol 4-phosphate cytidylyltransferase from Bacillus pumilus (strain SAFR-032).